Here is a 188-residue protein sequence, read N- to C-terminus: Small ribosomal subunit protein eS8 (188 aa).

Residues 1 to 34 are disordered; the sequence is MGISRDSRHKRRLTGGRYPVHKKKRKYELGRPSS. Residues 7 to 26 are compositionally biased toward basic residues; it reads SRHKRRLTGGRYPVHKKKRK.

The protein belongs to the eukaryotic ribosomal protein eS8 family.

In Theileria parva (East coast fever infection agent), this protein is Small ribosomal subunit protein eS8 (RPS8).